Consider the following 198-residue polypeptide: Calcium channel flower (198 aa).

3 helical membrane-spanning segments follow: residues 36–56, 67–89, and 114–134; these read LGIV…LSII, IIQM…VCIE, and AVPP…GLIF.

It belongs to the calcium channel flower family. As to quaternary structure, homomultimer. Associates with the dally/ magu complex.

It localises to the cell membrane. The protein resides in the cytoplasmic vesicle. It is found in the secretory vesicle. Its subcellular location is the synaptic vesicle membrane. The protein localises to the presynaptic cell membrane. It localises to the endosome. With respect to regulation, channel activity is inhibited by La(3+), which reduces Ca(2+) influx and thus inhibits it's function in promoting activity-dependent bulk endocytosis (ADBE) in response to high stimuli. Its function is as follows. Transmembrane protein which mediates synaptic endocytosis, fitness-based cell culling, neuronal culling, morphogen gradient scaling, and calcium transport. Regulates synaptic endocytosis and hence couples exo- with endocytosis. Controls two major modes of synaptic vesicle (SV) endocytosis in the synaptic boutons of neuromuscular junctions (NMJs); Ca(2+) channel-independent Clathrin-mediated endocytosis (CME) in response to mild stimulation, and Ca(2+) channel-dependent activity-dependent bulk endocytosis (ADBE) in response to strong stimulation. Functions in ADBE and subsequent SV reformation from bulk endosomes by initiating Ca(2+) channel-dependent phosphatidylinositol 4,5-bisphosphate (PtdIns(4,5)P2) compartmentalization in synaptic boutons. There it acts at the periactive zone to provide the low Ca(2+) levels required to initiate Calcineurin activation and upregulate PtdIns(4,5)P2. Conversely PtdIns(4,5)P2 enhances fwe Ca(2+) channel-activity, establishing a positive feedback loop that induces PtdIns(4,5)P2 microdomain at the periactive zone. These microdomains trigger bulk membrane invagination (i.e. ADBE) by triggering actin polymerization while also promoting localization of fwe to bulk endosomes, thereby removing the ADBE trigger to reduce endocytosis and prevent excess membrane uptake. PtdIns(4,5)P2 then promotes SV reformation from the bulk endosomes, to coordinate ADBE and subsequent SV reformation. Different combinations of the flower isoforms at the cell membrane are also required for the identification and elimination of suboptimal or supernumerary cells during development, regeneration, and adulthood. Required for the recognition and elimination of unfit cells in the developing wing during cell competition. In the developing pupal retina, mediates the elimination of unwanted postmitotic neurons, including supernumerary photoreceptor neurons that form at the periphery of the retina and are contained within incomplete ommatidia units. Also required for efficient elimination and replacement of old neurons by newly generated neurons during regeneration in the adult brain following mechanical injury. Downstream of the flower fitness fingerprints, cells identified as unwanted or unfit are eliminated via apoptosis through the expression of ahuizotl (azot). However, the cells marked for elimination by the flower isoforms only undergo apoptosis if additional thresholds are met; (1) their neighboring fit/healthy cells express different levels of the fwe isoforms, and (2) the levels of the protective signal SPARC expressed by the loser or unwanted cells are unable to inhibit caspase activation. These additional thresholds for flower-mediated apoptosis, allows useful cells to recover from transient and limited stress before they are unnecessarily eliminated. Functions with dally and magu in a mechanism of scaling, which utilises apoptosis to ensure that the dpp morphogen gradient, which mediates organ growth, remains proportional to the size of the growing wing. In this mechanism, fwe represses dally- and Magu-dependent activity in expanding the gradient, and dally/Magu inhibits fwe-dependent apoptosis to keep cell death rate low. When the levels of these different proteins are optimally regulated the gradient correctly scales with organ growth but when this fails, fwe-mediated apoptosis is activated to trim the developing tissue to match the correct size of the gradient. In Drosophila persimilis (Fruit fly), this protein is Calcium channel flower.